The primary structure comprises 217 residues: Oxygen regulatory protein NreC (217 aa).

The Response regulatory domain maps to 2 to 119 (KIVIADDHAV…QLLLAVRTVY (118 aa)). 4-aspartylphosphate is present on D53. Positions 148–213 (TNDPFKILSK…ELVEYALKKK (66 aa)) constitute an HTH luxR-type domain. Positions 172 to 191 (NKDIAEKLFVSVKTVEAHKT) form a DNA-binding region, H-T-H motif.

Post-translationally, phosphorylated by NreB.

Its subcellular location is the cytoplasm. Functionally, member of the two-component regulatory system NreB/NreC involved in the control of dissimilatory nitrate/nitrite reduction in response to oxygen. Phosphorylated NreC binds to a GC-rich palindromic sequence at the promoters of the nitrate (narGHJI) and nitrite (nir) reductase operons, as well as the putative nitrate transporter gene narT, and activates their expression. The polypeptide is Oxygen regulatory protein NreC (nreC) (Staphylococcus haemolyticus (strain JCSC1435)).